A 676-amino-acid chain; its full sequence is Methionine--tRNA ligase (676 aa).

The 'HIGH' region motif lies at 15–25 (PYANGSIHLGH). Cys146, Cys149, Cys159, and Cys162 together coordinate Zn(2+). The 'KMSKS' region signature appears at 332 to 336 (KMSKS). ATP is bound at residue Lys335. The region spanning 574-676 (DFAKVDMRIA…SGAQPGMQVK (103 aa)) is the tRNA-binding domain.

The protein belongs to the class-I aminoacyl-tRNA synthetase family. MetG type 1 subfamily. Homodimer. Zn(2+) serves as cofactor.

The protein resides in the cytoplasm. The catalysed reaction is tRNA(Met) + L-methionine + ATP = L-methionyl-tRNA(Met) + AMP + diphosphate. In terms of biological role, is required not only for elongation of protein synthesis but also for the initiation of all mRNA translation through initiator tRNA(fMet) aminoacylation. The protein is Methionine--tRNA ligase of Pectobacterium atrosepticum (strain SCRI 1043 / ATCC BAA-672) (Erwinia carotovora subsp. atroseptica).